Reading from the N-terminus, the 297-residue chain is Guanylate kinase (297 aa).

The Guanylate kinase-like domain occupies 5–184 (GKVIIISGPS…AVSKITDILI (180 aa)). 12-19 (GPSGVGKG) serves as a coordination point for ATP. Residues 205–297 (ENIVDQKYTY…IKQRSDFSGD (93 aa)) form a unknown region.

This sequence belongs to the guanylate kinase family.

The protein resides in the cytoplasm. The enzyme catalyses GMP + ATP = GDP + ADP. Essential for recycling GMP and indirectly, cGMP. This chain is Guanylate kinase (gmk), found in Mesoplasma florum (strain ATCC 33453 / NBRC 100688 / NCTC 11704 / L1) (Acholeplasma florum).